Reading from the N-terminus, the 273-residue chain is MATDSFIKLNPISFNRARFDLRDFAGISPKSISSLCCISPRLISCNHFSPRTLISGENGNILFSKKKIPAFVRCQTSLGIGRNQKWWEKELKPNMKSVTSPQDLVVSLRNAGDKLVVVDFFSPSCGGCKALHPKICKIAEKNPEVEFLQVNYEEHRSLCQSLNIHVLPFFRFYRGSSGRVCSFSCTNATIRKFKEALEKHGREQCSIGETKGLEEKELVAMAANKDLSFDYKPTSCGNIQEQKKKEIFLPKSPTFNKQKEVEHSLLLVSPAPA.

The transit peptide at 1-44 directs the protein to the chloroplast; that stretch reads MATDSFIKLNPISFNRARFDLRDFAGISPKSISSLCCISPRLIS. The Thioredoxin domain maps to 62–202; sequence LFSKKKIPAF…FKEALEKHGR (141 aa). Residues Cys125 and Cys128 each act as nucleophile in the active site. Cys125 and Cys128 are oxidised to a cystine.

The protein belongs to the thioredoxin family.

Its subcellular location is the plastid. The protein localises to the chloroplast. Probable thiol-disulfide oxidoreductase that may participate in various redox reactions. The chain is Thioredoxin-like 1-3, chloroplastic from Arabidopsis thaliana (Mouse-ear cress).